Reading from the N-terminus, the 463-residue chain is NADH-quinone oxidoreductase subunit N (463 aa).

Transmembrane regions (helical) follow at residues 5-25 (LLYG…LMLL), 34-54 (AGSA…VMQL), 72-92 (FSEI…VYSL), 99-119 (KYWI…DSAG), 120-140 (FISL…LMVL), 154-174 (YLLL…LVYG), 196-216 (LAAS…FPFH), 230-250 (VTAF…VRIL), 259-279 (AVTV…ITAI), 286-303 (KMLA…MFAL), 314-334 (LLYY…CFSI), 356-376 (AILL…PGFL), 393-413 (VAVL…GVVL), and 432-452 (LCWT…FMLL).

It belongs to the complex I subunit 2 family. NDH-1 is composed of 14 different subunits. Subunits NuoA, H, J, K, L, M, N constitute the membrane sector of the complex.

The protein resides in the cell inner membrane. It carries out the reaction a quinone + NADH + 5 H(+)(in) = a quinol + NAD(+) + 4 H(+)(out). Functionally, NDH-1 shuttles electrons from NADH, via FMN and iron-sulfur (Fe-S) centers, to quinones in the respiratory chain. The immediate electron acceptor for the enzyme in this species is believed to be ubiquinone. Couples the redox reaction to proton translocation (for every two electrons transferred, four hydrogen ions are translocated across the cytoplasmic membrane), and thus conserves the redox energy in a proton gradient. In Pelobacter propionicus (strain DSM 2379 / NBRC 103807 / OttBd1), this protein is NADH-quinone oxidoreductase subunit N.